The sequence spans 178 residues: Large ribosomal subunit protein uL6 (178 aa).

This sequence belongs to the universal ribosomal protein uL6 family. As to quaternary structure, part of the 50S ribosomal subunit.

This protein binds to the 23S rRNA, and is important in its secondary structure. It is located near the subunit interface in the base of the L7/L12 stalk, and near the tRNA binding site of the peptidyltransferase center. This Arthrobacter sp. (strain FB24) protein is Large ribosomal subunit protein uL6.